Reading from the N-terminus, the 433-residue chain is MSDLTDIQEEITRHEQQLVVARQKLKDAERAVEVYPDDVNKNTLQARQQTVSALEDKLADYKRRMADAVSRKKMDTKPTDPTGIEPDDHLKERSSLRYGNVLDVNAIDIEEPSGQTADWYTIGVYVIGFTIPIILKALYMLSTRGRQTVKENKGTRIRFKDDTSFEDINGIRRPKHLYVSMPTAQSTMKAEELTPGRFRTIVCGLFPTQIQVRNIMSPVMGVIGFSFFVKDWPEKIREFMEKECPFIKPEVKPGTPAQEVEFLKRNRVYFMTRQDVLDKNHVADIDKLIDYAASGDPTSPDDIESPNAPWVFACAPDRCPPTCIYVAGMAELGAFFSILQDMRNTIMASKTVGTAEEKLKKKSSFYQSYLRRTQSMGIQLDQRIILLYMLEWGKEMVDHFHLGDDMDPELRGLAQSLIDQKVKEISNQEPLKI.

The interval 1-50 is rdRP binding; sequence MSDLTDIQEEITRHEQQLVVARQKLKDAERAVEVYPDDVNKNTLQARQQT. Homomultimerization stretches follow at residues 1 to 79 and 100 to 125; these read MSDL…TKPT and NVLD…IGVY. The interval 1-100 is chaperone activity; that stretch reads MSDLTDIQEE…KERSSLRYGN (100 aa). The viral panhandle binding stretch occupies residues 1–175; that stretch reads MSDLTDIQEE…EDINGIRRPK (175 aa). A coiled-coil region spans residues 4–71; that stretch reads LTDIQEEITR…KRRMADAVSR (68 aa). Over residues 69 to 78 the composition is skewed to basic and acidic residues; sequence VSRKKMDTKP. A disordered region spans residues 69 to 90; sequence VSRKKMDTKPTDPTGIEPDDHL. The segment at 80 to 248 is interaction with glycoprotein N; the sequence is DPTGIEPDDH…FMEKECPFIK (169 aa). Residues 150–175 form an interaction with host RPS19 region; it reads KENKGTRIRFKDDTSFEDINGIRRPK. The interval 175 to 217 is viral RNA-binding; that stretch reads KHLYVSMPTAQSTMKAEELTPGRFRTIVCGLFPTQIQVRNIMS. Residues 178–181 carry the YxxL motif; sequence YVSM. The tract at residues 188–191 is interaction with host UBE2I/UBC9; that stretch reads MKAE. Residues 377-425 form a homomultimerization region; the sequence is GIQLDQRIILLYMLEWGKEMVDHFHLGDDMDPELRGLAQSLIDQKVKEI. The tract at residues 377–433 is interaction with host DAXX; sequence GIQLDQRIILLYMLEWGKEMVDHFHLGDDMDPELRGLAQSLIDQKVKEISNQEPLKI.

This sequence belongs to the hantavirus nucleocapsid protein family. Homotrimer. Homomultimer. Homomultimerizes and binds to viral genomic RNA to form the nucleocapsid. Interacts with host MAP1LC3B; this interaction participates to the protection of Gn from virus-triggered autophagy. Interacts with host SNAP29; this interaction participates to the protection of glycoprotein N from virus-triggered autophagy. Interacts (via N-terminus) with host RPS19; this interaction probably mediates the loading of the 40S ribosomal subunit on viral capped mRNA during N-mediated translation initiation. Interacts with the viral RdRp. Interacts with host SUMO1 (via N-terminus). Interacts with host DAXX. Interacts with the viral glycoprotein N (via C-terminus). Interacts with the viral glycoprotein C (via C-terminus).

It is found in the virion. Its subcellular location is the host cytoplasm. It localises to the host perinuclear region. The protein resides in the host Golgi apparatus. The protein localises to the host cis-Golgi network. Functionally, encapsidates the genome protecting it from nucleases. The encapsidated genomic RNA is termed the nucleocapsid (NC) and serves as template for transcription and replication. The nucleocapsid has a left-handed helical structure. As a trimer, specifically binds and acts as a chaperone to unwind the panhandle structure formed by the viral RNA (vRNA) termini. Involved in the transcription and replication initiation of vRNA by mediating primer annealing. Plays a role in cap snatching by sequestering capped RNAs in P bodies for use by the viral RdRp during transcription initiation. Substitutes for the cellular cap-binding complex (eIF4F) to preferentially facilitate the translation of capped mRNAs. Initiates the translation by specifically binding to the cap and 40S ribosomal subunit. Prevents the viral glycoprotein N (Gn) from autophagy-dependent breakdown maybe by blocking autophagosome formation. Inhibits host EIF2AK2/PKR dimerization to prevent PKR-induced translational shutdown in cells and thus the activation of the antiviral state. Also displays sequence-unspecific DNA endonuclease activity. The sequence is that of Nucleoprotein (N) from Puumala virus (strain P360).